The sequence spans 179 residues: NADH dehydrogenase [ubiquinone] 1 beta subcomplex subunit 9 (179 aa).

Position 2 is an N-acetylalanine (A2). The residue at position 85 (S85) is a Phosphoserine. The segment at 139 to 160 is disordered; sequence QLQEETPVGGPRTEALPPARKQ.

The protein belongs to the complex I LYR family. Mammalian complex I is composed of 45 different subunits.

The protein resides in the mitochondrion inner membrane. In terms of biological role, accessory subunit of the mitochondrial membrane respiratory chain NADH dehydrogenase (Complex I), that is believed to be not involved in catalysis. Complex I functions in the transfer of electrons from NADH to the respiratory chain. The immediate electron acceptor for the enzyme is believed to be ubiquinone. This is NADH dehydrogenase [ubiquinone] 1 beta subcomplex subunit 9 (NDUFB9) from Bos taurus (Bovine).